The following is a 2537-amino-acid chain: MEDFRGIAEESFPSFLTNSLFGNSGILENVTLSSNLGLPVAVSTLARDRSSTDNRYPDIQASYLVEGRFSVPSGSSPGSQSDAEPRERLQLSFQDDDSISRKKSYVESQRLSNALSKQSALQMETAGPEEEPAGATESLQGQDLFNRASPLEQAQDSPIDFHLQSWMNNKEPKIVVLDAGKHFEDKTLKSDLSHTSLLENEKLILPTSLEDSSDDDIDDEMFYDDHLEAYFEQLAIPGMIYEDLEGPEPPEKGFKLPTNGLRQANENGSLNCKFQSENNSSLISLDSHSSETTHKESEESQVICLPGTSNSIGTGDSRRYTDGMLPFSSGTWGTEKEIENLKGIVPDLNSECASKDVLVKTLRAIDVKLNSDNFHDANANRGGFDLTDPVKQGAECPHQNKTVLHMDGCLDTETPTVSIQENVDVASLKPISDSGINFTDAIWSPTCERRTCECHESIEKNKDKTDLPQSVVYQNEEGRWVTDLAYYTSFNSKQNLNVSLSDEMNEDFRSGSEAFDLIAQDEEEFNKEHQFIQEENIDAHNTSVALGDTSWGATINYSLLRKSRSTSDLDKDDASYLRLSLGEFFAQRSEALGCLGGGNNVKRPSFGYFIRSPEKREPIALIRKSDVSRGNLEKEMAHLNHDLYSGDLNEQSQAQLSEGSITLQVEAVESTSQVDENDVTLTADKGKTEDTFFMSNKPQRYKDKLPDSGDSMLRISTIASAIAEASVNTDPSQLAAMIKALSNKTRDKTFQEDEKQKDYSHVRHFLPNDLEKSNGSNALDMEKYLKKTEVSRYESALENFSRASMSDTWDLSLPKEQTTQDIHPVDLSATSVSVRAPEENTAAIVYVENGESENQESFRTINSSNSVTNRENNSAVVDVKTCSIDNKLQDVGNDEKATSISTPSDSYSSVRNPRITSLCLLKDCEEIRDNRENQRQNECVSEISNSEKHVTFENHRIVSPKNSDLKNTSPEHGGRGSEDEQESFRPSTSPLSHSSPSEISGTSSSGCALESFGSAAQQQQPPCEQELSPLVCSPAGVSRLTYVSEPESSYPTTATDDALEDRKSDITSELSTTIIQGSPAALEERAMEKLREKVPFQNRGKGTLSSIIQNNSDTRKATETTSLSSKPEYVKPDFRWSKDPSSKSGNLLETSEVGWTSNPEELDPIRLALLGKSGLSCQVGSATSHPVSCQEPIDEDQRISPKDKSTAGREFSGQVSHQTTSENQCTPIPSSTVHSSVADMQNMPAAVHALLTQPSLSAAPFAQRYLGTLPSTGSTTLPQCHAGNATVCGFSGGLPYPAVAGEPVQNSVAVGICLGSNIGSGWMGTSSLCNPYSNTLNQNLLSTTKPFPVPSVGTNCGIEPWDSGVTSGLGSVRVPEELKLPHACCVGIASQTLLSVLNPTDRWLQVSIGVLSISVNGEKVDLSTYRCLVFKNKAIIRPHATEEIKVLFIPSSPGVFRCTFSVASWPCSTDAETIVQAEALASTVTLTAIAESPVIEVETEKKDVLDFGDLTYGGWKALPLKLINRTHATVPIRLIINANAVAWRCFTFSKESVRAPVEVAPCADVVTRLAGPSVVNHMMPASYDGQDPEFLMIWVLFHSPKKQISSSDILDSAEEFSAKVDIEVDSPNPTPVLRSVSLRARAGIARIHAPRDLQTMHFLAKVASSRKQHLPLKNAGNIEVYLDIKVPEQGSHFSVDPKNLLLKPGEEHEVIVSFTPKDPEACEERILKIFVQPFGPQYEVVLKGEVISSGSKPLSPGPCLDIPSILSNKQFLAWGGVPLGRTQLQKLALRNNSASTTQHLRLLIRGQDQDCFQLQNTFGSEQRLTSNCEIRIHPKEDIFISVLFAPTRLSCMLARLEIKQLGNRSQPGIKFTIPLSGYGGTSNLILEGVKKLSDSYMVTVNGLVPGKESKIVFSVRNTGSRAAFVKAVGFKDSQKKVLLDPKVLRIFPDKFVLKERTQENVTLIYNPSDRGINNKTATELSTVYLFGGDEISRQQYRRALLHKPEMIKQILPEHSVLQNINFVEAFQDELLVTEVYDLPQRPNDVQLFYGSMCKIILSVIGEFRDCISSREFLQPSSKASLESTSDLGASGKHGGNVSLDVLPVKGPQGSPLLSRAARPPLDQLASEEPWTVLPEHLILVAPSPCDMAKTGRFQIVNNSVRLLRFELCWPAHCLTVTPQHGCVAPESKLQILVSPNSSLSTKQSMFPWSGLIYIHCDDGQKKIVKVQIREDLTQVELLTRLTSKPFGILSPVSEPSVSHLVKPMTKPPSTKVEIRNKSITFPTTEPGETSESCLELENHGTTDVKWHLSSLAPPYVKGVDESGDVFRATYAAFRCSPISGLLESHGIQKVSITFLPRGRGDYAQFWDVECHPLKEPHMKHTLRFQLSGQSIEAENEPENACLSTDSLIKIDHLVKPRRQAVSEASARIPEQLDVTARGVYAPEDVYRFRPTSVGESRTLKVNLRNNSFITHSLKFLSPREPFYVKHSKYSLRAQHYINMPVQFKPKSAGKFEALLVIQTDEGKSIAIRLIGEALGKN.

Disordered stretches follow at residues 69–138 (FSVP…ATES) and 288–308 (HSSE…LPGT). A compositionally biased stretch (low complexity) spans 70-81 (SVPSGSSPGSQS). Residues 106–122 (VESQRLSNALSKQSALQ) show a composition bias toward polar residues. Residues 288–298 (HSSETTHKESE) show a composition bias toward basic and acidic residues. At Ser-812 the chain carries Phosphoserine. 4 disordered regions span residues 950-1021 (VTFE…QQQP), 1043-1064 (VSEP…DRKS), 1101-1158 (KGTL…WTSN), and 1182-1234 (ATSH…STVH). Positions 960–970 (PKNSDLKNTSP) are enriched in polar residues. Positions 984–1005 (FRPSTSPLSHSSPSEISGTSSS) are enriched in low complexity. 2 stretches are compositionally biased toward polar residues: residues 1046–1055 (PESSYPTTAT) and 1103–1112 (TLSSIIQNNS). The span at 1128–1141 (EYVKPDFRWSKDPS) shows a compositional bias: basic and acidic residues. The span at 1142-1158 (SKSGNLLETSEVGWTSN) shows a compositional bias: polar residues. Residues 1195 to 1207 (EDQRISPKDKSTA) show a composition bias toward basic and acidic residues. Residues 1213-1234 (GQVSHQTTSENQCTPIPSSTVH) show a composition bias toward polar residues. Phosphoserine occurs at positions 1755, 2098, and 2110. Hydroxyproline is present on Pro-2313.

As to quaternary structure, interacts with SHBG. Interacts with PLK4; this interaction mediates the formation of a ternary complex composed by PLK4, TENT5C and CEP192. Interacts with CCDC66. In terms of processing, hydroxylation by PHD1/EGLN2 at Pro-2313 promotes ubiquitination. Post-translationally, ubiquitinated by a SCF(SKP2) complex following proline hydroxylation. Ubiquitinated in a FBXL13-dependent manner, leading to proteasomal degradation.

It localises to the cytoplasm. It is found in the cytoskeleton. The protein localises to the microtubule organizing center. Its subcellular location is the centrosome. The protein resides in the centriole. Its function is as follows. Required for mitotic centrosome maturation and bipolar spindle assembly. Appears to be a major regulator of pericentriolar material (PCM) recruitment, centrosome maturation, and centriole duplication. Centrosome-specific activating scaffold for AURKA and PLK1. The polypeptide is Centrosomal protein of 192 kDa (Homo sapiens (Human)).